A 248-amino-acid polypeptide reads, in one-letter code: Deoxyribose-phosphate aldolase (248 aa).

Asp117 acts as the Proton donor/acceptor in catalysis. Catalysis depends on Lys179, which acts as the Schiff-base intermediate with acetaldehyde. Catalysis depends on Lys208, which acts as the Proton donor/acceptor.

This sequence belongs to the DeoC/FbaB aldolase family. DeoC type 1 subfamily.

It localises to the cytoplasm. The enzyme catalyses 2-deoxy-D-ribose 5-phosphate = D-glyceraldehyde 3-phosphate + acetaldehyde. Its pathway is carbohydrate degradation; 2-deoxy-D-ribose 1-phosphate degradation; D-glyceraldehyde 3-phosphate and acetaldehyde from 2-deoxy-alpha-D-ribose 1-phosphate: step 2/2. Its function is as follows. Catalyzes a reversible aldol reaction between acetaldehyde and D-glyceraldehyde 3-phosphate to generate 2-deoxy-D-ribose 5-phosphate. The chain is Deoxyribose-phosphate aldolase from Thermotoga sp. (strain RQ2).